Reading from the N-terminus, the 89-residue chain is Small ribosomal subunit protein bS20 (89 aa).

It belongs to the bacterial ribosomal protein bS20 family.

Functionally, binds directly to 16S ribosomal RNA. In Helicobacter pylori (strain ATCC 700392 / 26695) (Campylobacter pylori), this protein is Small ribosomal subunit protein bS20.